The following is a 1270-amino-acid chain: Myosin-1 (1270 aa).

Positions 1 to 40 (MGHSRRPAGGEKKSRGFGRSKAAADVGDGRQAGKPQVKKA) are disordered. Positions 50–729 (IGVSDLTLLS…TLFALETMRD (680 aa)) constitute a Myosin motor domain. Position 143–150 (143–150 (GESGAGKT)) interacts with ATP. The residue at position 371 (S371) is a Phosphoserine. An actin-binding region spans residues 418–500 (SIGILDIYGF…PGVFAALNDA (83 aa)). IQ domains lie at 733 to 753 (HNMA…RIEC) and 754 to 779 (AIRI…QGHQ). The TH1 domain occupies 787 to 980 (RRRMSLLGSR…TIHTSAGEPP (194 aa)). Disordered stretches follow at residues 960–1102 (GASN…VLYD) and 1144–1270 (PEAY…DDEW). Over residues 963 to 974 (NVDSYKSSTIHT) the composition is skewed to polar residues. Over residues 1023–1058 (ARQPMPQPTPQPAAVQPPPAPRPAVSPAAQPRPVPQ) the composition is skewed to pro residues. Positions 1059 to 1078 (PVAAVAAAQHTRNASSSSTR) are enriched in low complexity. Positions 1079–1088 (APPPPPPATP) are enriched in pro residues. In terms of domain architecture, SH3 spans 1092 to 1153 (QRKPMAKVLY…PEAYLEEQVA (62 aa)). Positions 1157–1167 (KPAPPPPPPAA) are enriched in pro residues. Composition is skewed to low complexity over residues 1168-1186 (PRAS…VAAK) and 1238-1252 (NSAS…LAEA).

Belongs to the TRAFAC class myosin-kinesin ATPase superfamily. Myosin family. In terms of processing, phosphorylation of the TEDS site (Ser-371) is required for the polarization of the actin cytoskeleton. Phosphorylation probably activates the myosin-I ATPase activity.

It is found in the cytoplasm. Its subcellular location is the cytoskeleton. The protein resides in the actin patch. In terms of biological role, type-I myosin implicated in the organization of the actin cytoskeleton. Required for proper actin cytoskeleton polarization. At the cell cortex, assembles in patch-like structures together with proteins from the actin-polymerizing machinery and promotes actin assembly. Functions as actin nucleation-promoting factor (NPF) for the Arp2/3 complex. Plays an important role in polarized growth, spore germination, hyphal morphogenesis, and septal wall formation. In Aspergillus niger (strain ATCC MYA-4892 / CBS 513.88 / FGSC A1513), this protein is Myosin-1 (myoA).